Here is a 156-residue protein sequence, read N- to C-terminus: Small ribosomal subunit protein uS7 (156 aa).

As to quaternary structure, part of the 30S ribosomal subunit. Contacts proteins S9 and S11.

In terms of biological role, one of the primary rRNA binding proteins, it binds directly to 16S rRNA where it nucleates assembly of the head domain of the 30S subunit. Is located at the subunit interface close to the decoding center, probably blocks exit of the E-site tRNA. The chain is Small ribosomal subunit protein uS7 from Rhodopseudomonas palustris (strain ATCC BAA-98 / CGA009).